The chain runs to 389 residues: Agamous-like MADS-box protein AGL65 (389 aa).

The 61-residue stretch at 1–61 (MGRVKLKIKR…GRATAFHGEH (61 aa)) folds into the MADS-box domain. 2 coiled-coil regions span residues 77 to 131 (QERT…LMEC) and 293 to 325 (GMEE…QQQD). The disordered stretch occupies residues 310-343 (NLQQQQQQQQQQQQQDPSMYDPMANNNGGCFQIP). Over residues 312-324 (QQQQQQQQQQQQQ) the composition is skewed to low complexity.

In terms of assembly, forms a heterodimer with AGL104. Expressed in pollen.

The protein resides in the nucleus. Functionally, probable transcription factor that forms a heterodimer with the MADS-box protein AGL104 and is involved in the regulation of pollen maturation at the late stages of pollen development and pollen tube growth. This Arabidopsis thaliana (Mouse-ear cress) protein is Agamous-like MADS-box protein AGL65.